Here is a 178-residue protein sequence, read N- to C-terminus: MERKFLTDLGLNPDQVNSIMAQYGKDMQEYEGLEAERDALKKTSSELSSKIEDLKANSANVEELTKQIEKLKSDNENATKQLNAQKLDFAVTSTIKDFGAKNAKAVKALLNHDDIRFDSKGNLIGLEDQLKSLKDSDSYLFAEDKPAGKPIQAFPTGNPVAGGKDVSLHQKIAQRLKG.

The protein belongs to the SPP1-like scaffolding protein family. As to quaternary structure, homodimer.

In terms of biological role, scaffolding protein involved in the icosahedric procapsid assembly. Coassembles with the capsid proteins to form the procapsid, in which the scaffolding protein is found within the external shell of icosahedrally arranged capsid protein subunits. In a subsequent step the scaffolding protein molecules are released from the procapsid. The sequence is that of Capsid assembly scaffolding protein (g20) from Lactobacillus delbrueckii (Lactococcus delbrueckii bacteriophage LL-H).